Reading from the N-terminus, the 195-residue chain is Interferon omega-1 (195 aa).

The segment at residues 1–21 (MALLFPLLAALVMTSYSPVGS) is a signal peptide (or 23 in some molecules). Cystine bridges form between Cys-24–Cys-122 and Cys-52–Cys-162. Asn-101 carries N-linked (GlcNAc...) asparagine glycosylation.

The protein belongs to the alpha/beta interferon family.

Its subcellular location is the secreted. In Homo sapiens (Human), this protein is Interferon omega-1 (IFNW1).